The chain runs to 404 residues: Cysteine desulfurase IscS (404 aa).

Pyridoxal 5'-phosphate contacts are provided by residues 75–76 (AT), N155, Q183, and 203–205 (SGH). K206 carries the post-translational modification N6-(pyridoxal phosphate)lysine. T243 contacts pyridoxal 5'-phosphate. The active-site Cysteine persulfide intermediate is C328. C328 is a binding site for [2Fe-2S] cluster.

This sequence belongs to the class-V pyridoxal-phosphate-dependent aminotransferase family. NifS/IscS subfamily. In terms of assembly, homodimer. Forms a heterotetramer with IscU, interacts with other sulfur acceptors. Pyridoxal 5'-phosphate is required as a cofactor.

It localises to the cytoplasm. The catalysed reaction is (sulfur carrier)-H + L-cysteine = (sulfur carrier)-SH + L-alanine. Its pathway is cofactor biosynthesis; iron-sulfur cluster biosynthesis. Functionally, master enzyme that delivers sulfur to a number of partners involved in Fe-S cluster assembly, tRNA modification or cofactor biosynthesis. Catalyzes the removal of elemental sulfur atoms from cysteine to produce alanine. Functions as a sulfur delivery protein for Fe-S cluster synthesis onto IscU, an Fe-S scaffold assembly protein, as well as other S acceptor proteins. The sequence is that of Cysteine desulfurase IscS from Actinobacillus succinogenes (strain ATCC 55618 / DSM 22257 / CCUG 43843 / 130Z).